The primary structure comprises 347 residues: NADH-ubiquinone oxidoreductase chain 2 (347 aa).

A run of 10 helical transmembrane segments spans residues 3–23, 25–45, 66–86, 93–115, 149–169, 178–198, 201–221, 237–257, 274–294, and 325–345; these read PPIL…VMLS, HWLL…PILM, ASML…QWVI, IASI…HFWV, INTN…GWGG, IMAY…TYNP, MILN…LFML, FPLI…LPPL, NMII…YFYL, and LLPP…MLSV.

This sequence belongs to the complex I subunit 2 family. In terms of assembly, core subunit of respiratory chain NADH dehydrogenase (Complex I) which is composed of 45 different subunits. Interacts with TMEM242.

The protein resides in the mitochondrion inner membrane. The catalysed reaction is a ubiquinone + NADH + 5 H(+)(in) = a ubiquinol + NAD(+) + 4 H(+)(out). In terms of biological role, core subunit of the mitochondrial membrane respiratory chain NADH dehydrogenase (Complex I) which catalyzes electron transfer from NADH through the respiratory chain, using ubiquinone as an electron acceptor. Essential for the catalytic activity and assembly of complex I. The sequence is that of NADH-ubiquinone oxidoreductase chain 2 from Canis lupus (Gray wolf).